The following is a 127-amino-acid chain: Large ribosomal subunit protein bL17 (127 aa).

The protein belongs to the bacterial ribosomal protein bL17 family. As to quaternary structure, part of the 50S ribosomal subunit. Contacts protein L32.

The sequence is that of Large ribosomal subunit protein bL17 from Xanthomonas axonopodis pv. citri (strain 306).